Reading from the N-terminus, the 456-residue chain is Flagellum-specific ATP synthase (456 aa).

182–189 (AGSGVGKS) provides a ligand contact to ATP.

It belongs to the ATPase alpha/beta chains family.

It is found in the cytoplasm. It catalyses the reaction ATP + H2O + 4 H(+)(in) = ADP + phosphate + 5 H(+)(out). In terms of biological role, probable catalytic subunit of a protein translocase for flagellum-specific export, or a proton translocase involved in local circuits at the flagellum. May be involved in a specialized protein export pathway that proceeds without signal peptide cleavage. The sequence is that of Flagellum-specific ATP synthase (fliI) from Salmonella typhimurium (strain LT2 / SGSC1412 / ATCC 700720).